The chain runs to 191 residues: Putative inactive glutathione hydrolase 4 (191 aa).

Residue threonine 54 is the Nucleophile of the active site. Residues threonine 72, asparagine 74, glutamate 93, aspartate 96, 126–127, and 147–148 contribute to the L-glutamate site; these read SS and GG.

Belongs to the gamma-glutamyltransferase family. In terms of tissue distribution, expressed at low levels in embryo, roots and leaves. In mature plants, expression is restricted to vascular tissues of roots, leaves, flowers and siliques.

This chain is Putative inactive glutathione hydrolase 4 (GGT4), found in Arabidopsis thaliana (Mouse-ear cress).